The following is a 1392-amino-acid chain: DNA-directed RNA polymerase subunit beta' (1392 aa).

Positions 70, 72, 85, and 88 each coordinate Zn(2+). 3 residues coordinate Mg(2+): Asp-460, Asp-462, and Asp-464. Positions 810, 884, 891, and 894 each coordinate Zn(2+).

Belongs to the RNA polymerase beta' chain family. The RNAP catalytic core consists of 2 alpha, 1 beta, 1 beta' and 1 omega subunit. When a sigma factor is associated with the core the holoenzyme is formed, which can initiate transcription. It depends on Mg(2+) as a cofactor. Zn(2+) is required as a cofactor.

It catalyses the reaction RNA(n) + a ribonucleoside 5'-triphosphate = RNA(n+1) + diphosphate. Its function is as follows. DNA-dependent RNA polymerase catalyzes the transcription of DNA into RNA using the four ribonucleoside triphosphates as substrates. This chain is DNA-directed RNA polymerase subunit beta', found in Geobacter metallireducens (strain ATCC 53774 / DSM 7210 / GS-15).